The chain runs to 87 residues: Small ribosomal subunit protein bS20 (87 aa).

This sequence belongs to the bacterial ribosomal protein bS20 family.

Functionally, binds directly to 16S ribosomal RNA. The sequence is that of Small ribosomal subunit protein bS20 from Alkaliphilus oremlandii (strain OhILAs) (Clostridium oremlandii (strain OhILAs)).